Reading from the N-terminus, the 1126-residue chain is MSTAAPAASATNSAIPAQKEFSLPPSTDTVSVPVNRKKQKRRQKQAARLAAERQSNGHISPDAATQNGSSPAADPEGYHSDEFGDVDQEQLSNGDANHKDDQDSVDAHDDYQYPGNGSEGLQKPTGRKSKKKKGKKGPNGTHAPEDETATHASTPSVSMSHPLPPTLPSHLGPRPILKPAKTRSIWNTSTQEERENIKTFWLELGEEERRQLVKVEKDAVLKKMKEQQRHSCSCTVCGRKRTAIEEELEVLYDAYYEELEQYANHNQGSFEKGPPIVPPPRLYQPPLRSPGQHTRTQGQFHPSRGRIHEVPEEEDDDDLEEDYDEDEEDDEPYSDEDSDDEDDEARAARADFFAFGNSLTVKDGILTVADDLLKNDGKHFIDMMEQLAERRMQREEDTQYGIAAAHQSLHSGHNHGPFDEEDYDEEEDEDYDSQEDEDYEEDEMDTMTEEQRMEEGRRMFQIFAARMFEQRVLTAYREKVAEQRQQKLIEELLEEETRNEQRNAKKAREAQKRKDKKKLQKQAKEEERARREAEKAAEEAAAKAEQEKKLEEQRKKREEQRKKKEADRKAQEEERARKEAEKLRRQREERERQAEVERKQREEKKRREEARRKEKEERELREKKAKEEQLQKDAAKAEEAAKEREKREYQAKRTSPFSSNQHPQISSSPVAHSPHIQSGIPVVPKAPTPARPRQPSQQDSHTSSPHSQPASTDPSQASVSPRSMPISQSSGASSVASKHVHGLHAMFHQPQPSAPLSPLGRSIPPGFSAMNGLPPGPPGLTGILGRPPMAHELPVYPPHSGPFIGQFRGYPTPNGIPAAPGINGARAMPPGRGFPLESAHGFPFHGQQQIPGAFSAQQSGLPHGHSRQPSGSFERSPLEGQTQPMPISRPSPIKRPSSTQQDQRKNGDRTAQRDVDDLSAHLGSSALLDDTDVPFASTLSQSLPGATAPGPLPGPARASFGGPSLFPDPLSTSGWSNNAFGSGVHHRAHTSRPVAIRLLVIQACKQLNTMSPFKGADGFHDVSLVLRQVEQLRPQNEPSISLKEMLDICDTEGSTQNGGGSFSTKKDETGEFVKFEPDNNSAASGHRGSIVPGEIGSPVPSSSLPAFGGIGTPSVLRQFSSPPMGF.

The segment covering 1 to 17 has biased composition (low complexity); that stretch reads MSTAAPAASATNSAIPA. Disordered regions lie at residues 1 to 192, 266 to 348, 404 to 453, 492 to 774, 823 to 914, 939 to 965, and 1075 to 1126; these read MSTA…STQE, NQGS…ARAA, AAHQ…EQRM, LLEE…NGLP, NGAR…AQRD, LSQS…GPSL, and FEPD…PMGF. Over residues 35 to 45 the composition is skewed to basic residues; it reads NRKKQKRRQKQ. Residues 96 to 111 are compositionally biased toward basic and acidic residues; sequence ANHKDDQDSVDAHDDY. The segment covering 125–136 has biased composition (basic residues); that stretch reads TGRKSKKKKGKK. Polar residues predominate over residues 291–300; sequence GQHTRTQGQF. 2 stretches are compositionally biased toward acidic residues: residues 311-344 and 419-448; these read PEEE…EDDE and DEED…DTMT. Residues 479–655 are a coiled coil; sequence KVAEQRQQKL…KREYQAKRTS (177 aa). Composition is skewed to basic and acidic residues over residues 492–512 and 522–651; these read LLEE…EAQK and QAKE…EYQA. Polar residues-rich tracts occupy residues 655 to 670 and 694 to 721; these read SPFS…SSPV and QPSQ…SVSP. Over residues 727–737 the composition is skewed to low complexity; the sequence is SQSSGASSVAS. Composition is skewed to polar residues over residues 846 to 860 and 867 to 885; these read GQQQ…QQSG and RQPS…TQPM. Residues 886-898 show a composition bias toward low complexity; sequence PISRPSPIKRPSS. The span at 902-914 shows a compositional bias: basic and acidic residues; that stretch reads DQRKNGDRTAQRD. A compositionally biased stretch (polar residues) spans 1115–1126; it reads VLRQFSSPPMGF.

Belongs to the NST1 family.

It is found in the cytoplasm. May act as a negative regulator of salt tolerance. This is Stress response protein nst1 (nst1) from Aspergillus clavatus (strain ATCC 1007 / CBS 513.65 / DSM 816 / NCTC 3887 / NRRL 1 / QM 1276 / 107).